Consider the following 343-residue polypeptide: F17c-G fimbrial adhesin (343 aa).

The signal sequence occupies residues 1–22 (MTNFYKVFLAVFILVCCNISHA). The tract at residues 23–199 (AVSFIGSTEN…LNPFTLNDTV (177 aa)) is receptor-binding lectin domain. A carbohydrate contacts are provided by residues 65 to 66 (AN), 110 to 111 (DT), and 138 to 141 (STQG). Cys-75 and Cys-132 are disulfide-bonded. Residues 200-343 (TSCRLLTPSA…GISTFTFSYQ (144 aa)) are fimbrillin-binding domain. A disordered region spans residues 287–307 (LKFGPDSPVKGNENQWQLSTG). Over residues 298–307 (NENQWQLSTG) the composition is skewed to polar residues.

Belongs to the fimbrial protein family.

The protein localises to the fimbrium. In terms of biological role, essential fimbrial adhesion factor that mediates binding to N-acetylglucosamine-containing receptors in the host intestinal microvilli, leading to colonization of the intestinal tissue, and diarrhea or septicemia. Also confers adhesiveness to laminin and basement membranes. This Escherichia coli protein is F17c-G fimbrial adhesin (f17cG).